The chain runs to 579 residues: Putative truncated flagellar export/assembly protein LfhA (579 aa).

3 consecutive transmembrane segments (helical) span residues 86-106, 124-144, and 177-197; these read AIAGMMILAINLIGGVCIGIF, IGDGLVAQIPSLLLSTAAAII, and FVLAVVPGMPHLPFLLFSALL.

It belongs to the FHIPEP (flagella/HR/invasion proteins export pore) family.

The protein localises to the cell inner membrane. This is Putative truncated flagellar export/assembly protein LfhA from Escherichia coli (strain K12).